The following is a 466-amino-acid chain: Zinc finger protein NUTCRACKER (466 aa).

A compositionally biased stretch (polar residues) spans methionine 1–threonine 23. Positions methionine 1 to serine 29 are disordered. Position 56 is a phosphoserine (serine 56). The segment at phenylalanine 66 to histidine 88 adopts a C2H2-type 1 zinc-finger fold. The residue at position 98 (threonine 98) is a Phosphothreonine; by KIN10. The C2H2-type 2 zinc finger occupies tyrosine 107–histidine 137. The Nuclear localization signal signature appears at cysteine 134–lysine 141. Residues tryptophan 142–glycine 165 form a C2H2-type 2; degenerate zinc finger. Zn(2+)-binding residues include cysteine 144, cysteine 147, histidine 160, cysteine 164, cysteine 171, and cysteine 173. A CCHC-type 2; atypical zinc finger spans residues tyrosine 169–alanine 192. Phosphoserine; by KIN10 is present on residues serine 178 and serine 182. The segment at arginine 179–aspartate 191 is SHR-binding. Zn(2+)-binding residues include histidine 186 and cysteine 190.

Interacts with AKIN10. In terms of processing, inhibition of transcription factor activity by KIN10-mediated phosphorylation at Thr-98, Ser-178 and Ser-182 under sugar deprivation conditions, thus delaying flowering. In terms of tissue distribution, highly expressed in vegetative organs and at lower levels in flowers and siliques. Expressed predominantly in roots. In roots, present in cortex, endodermis, and pericycle layer.

The protein localises to the nucleus. Transcription activator that binds to the DNA sequence 5'-CTTTTGTCC-3'. Regulates photoperiodic flowering by modulating sugar transport and metabolism. Regulates SUS1 and SUS4. Transcription factor that regulates tissue boundaries and asymmetric cell division. Contributes to the sequestration of 'SHORT-ROOT' to the nucleus. In Arabidopsis thaliana (Mouse-ear cress), this protein is Zinc finger protein NUTCRACKER.